Consider the following 1312-residue polypeptide: Retinoblastoma-like protein A (1312 aa).

7 disordered regions span residues 1–67 (MMAH…NNEN), 168–231 (SSSS…KNSS), 336–359 (HNYN…NNNN), 536–611 (NNNN…IYGT), 987–1023 (NNNN…NNNN), 1168–1236 (KKND…NNTE), and 1249–1312 (EESP…RLKS). Low complexity predominate over residues 10-67 (TNINTKTTAPTTTTTEQQPEQQQQQPEQQQQEKQNNNNNNNNNNNNNNNINNNENNEN). Positions 36–117 (EQQQQEKQNN…TSSALNVDQD (82 aa)) form a coiled coil. A compositionally biased stretch (polar residues) spans 168 to 179 (SSSSFQPDNNSK). Residues 180–189 (IKGRKIRKTN) are compositionally biased toward basic residues. A coiled-coil region spans residues 195-230 (NNDSNEEEEETTTDTEEEEEEDTLLNENNNSINKNS). Acidic residues predominate over residues 198-218 (SNEEEEETTTDTEEEEEEDTL). 3 stretches are compositionally biased toward low complexity: residues 219-231 (LNEN…KNSS), 337-359 (NYNN…NNNN), and 536-595 (NNNN…SSSS). 3 stretches are compositionally biased toward low complexity: residues 1185-1234 (NNNN…NNNN), 1251-1275 (SPST…NNNK), and 1286-1305 (SPSS…SSSG).

It belongs to the retinoblastoma protein (RB) family.

The protein resides in the nucleus. Key regulator of entry into cell division. Directly involved in heterochromatin formation by maintaining overall chromatin structure and, in particular, that of constitutive heterochromatin by stabilizing histone methylation. Controls histone H4 'Lys-20' trimethylation. Probably acts as a transcription repressor by recruiting chromatin-modifying enzymes to promoters. Plays a dual role, regulating cell-cycle progression and transcriptional events leading to terminal differentiation. In the absence of a G1 phase, functions in late G2 controlling the expression of both S-phase and mitotic genes. Controls stalk/spore preference by suppressing the DIF response in cells destined for the spore pathway. DIF is a chlorinated hydroxyphenone made by cells of spore pathway that promotes stalk differentiation. The chain is Retinoblastoma-like protein A from Dictyostelium discoideum (Social amoeba).